Reading from the N-terminus, the 448-residue chain is B box and SPRY domain-containing protein (448 aa).

Over residues 1-18 the composition is skewed to low complexity; it reads MSSDVSGTESGSESGPES. Positions 1–58 are disordered; that stretch reads MSSDVSGTESGSESGPESVPEPVPEPGPEPESEPGPGPAPGPGPGPAPGPGPGLGREP. Pro residues predominate over residues 19 to 51; it reads VPEPVPEPGPEPESEPGPGPAPGPGPGPAPGPG. The B box-type zinc finger occupies 63-111; the sequence is QPCQLCPEHGKPLSWFCLSERRPVCATCAGFGGRCHRHRIRRAEEHAEE. Residues 257-448 form the B30.2/SPRY domain; that stretch reads SPLLTQLWAT…VADQVISIVC (192 aa).

Interacts with TRPV5 and TRPV6. Interacts with YWHAZ/14-3-3 protein zeta. In terms of tissue distribution, predominantly expressed in testis. Expressed in brain at low levels.

Its subcellular location is the cytoplasm. It localises to the membrane. In terms of biological role, may regulate epithelial calcium transport by inhibiting TRPV5 activity. The protein is B box and SPRY domain-containing protein (Bspry) of Rattus norvegicus (Rat).